The chain runs to 434 residues: Flagellum-specific ATP synthase (434 aa).

164 to 171 provides a ligand contact to ATP; it reads AGSGVGKS.

This sequence belongs to the ATPase alpha/beta chains family.

The protein localises to the cytoplasm. It carries out the reaction ATP + H2O + 4 H(+)(in) = ADP + phosphate + 5 H(+)(out). Probable catalytic subunit of a protein translocase for flagellum-specific export, or a proton translocase involved in local circuits at the flagellum. The chain is Flagellum-specific ATP synthase (fliI) from Helicobacter pylori (strain ATCC 700392 / 26695) (Campylobacter pylori).